A 236-amino-acid polypeptide reads, in one-letter code: UPF0257 lipoprotein YnfC (236 aa).

Residues 1-16 form the signal peptide; it reads MKKPLLLTLLCMILAG. Cysteine 17 carries the N-palmitoyl cysteine lipid modification. A lipid anchor (S-diacylglycerol cysteine) is attached at cysteine 17.

The protein belongs to the UPF0257 family.

It localises to the cell membrane. This Salmonella dublin (strain CT_02021853) protein is UPF0257 lipoprotein YnfC.